A 140-amino-acid chain; its full sequence is ATP synthase epsilon chain (140 aa).

This sequence belongs to the ATPase epsilon chain family. In terms of assembly, F-type ATPases have 2 components, CF(1) - the catalytic core - and CF(0) - the membrane proton channel. CF(1) has five subunits: alpha(3), beta(3), gamma(1), delta(1), epsilon(1). CF(0) has three main subunits: a, b and c.

It is found in the cell inner membrane. In terms of biological role, produces ATP from ADP in the presence of a proton gradient across the membrane. This chain is ATP synthase epsilon chain, found in Alkalilimnicola ehrlichii (strain ATCC BAA-1101 / DSM 17681 / MLHE-1).